The following is an 89-amino-acid chain: Small ribosomal subunit protein uS15 (89 aa).

This sequence belongs to the universal ribosomal protein uS15 family. As to quaternary structure, part of the 30S ribosomal subunit. Forms a bridge to the 50S subunit in the 70S ribosome, contacting the 23S rRNA.

Its function is as follows. One of the primary rRNA binding proteins, it binds directly to 16S rRNA where it helps nucleate assembly of the platform of the 30S subunit by binding and bridging several RNA helices of the 16S rRNA. Functionally, forms an intersubunit bridge (bridge B4) with the 23S rRNA of the 50S subunit in the ribosome. The protein is Small ribosomal subunit protein uS15 of Geobacillus sp. (strain WCH70).